We begin with the raw amino-acid sequence, 300 residues long: Protoheme IX farnesyltransferase (300 aa).

9 helical membrane passes run 31–51, 52–72, 92–112, 123–145, 152–172, 179–199, 225–245, 247–267, and 280–300; these read VMSL…NSLH, PFIS…AGAI, IVRG…MAFF, FLSA…MWLK, IVIG…SVSG, VILF…LALF, ILIY…VGMS, IIYL…SISL, and FFAY…FCRV.

The protein belongs to the UbiA prenyltransferase family. Protoheme IX farnesyltransferase subfamily.

It is found in the cell inner membrane. It catalyses the reaction heme b + (2E,6E)-farnesyl diphosphate + H2O = Fe(II)-heme o + diphosphate. The protein operates within porphyrin-containing compound metabolism; heme O biosynthesis; heme O from protoheme: step 1/1. In terms of biological role, converts heme B (protoheme IX) to heme O by substitution of the vinyl group on carbon 2 of heme B porphyrin ring with a hydroxyethyl farnesyl side group. The protein is Protoheme IX farnesyltransferase of Rickettsia bellii (strain OSU 85-389).